We begin with the raw amino-acid sequence, 360 residues long: Chorismate synthase (360 aa).

2 residues coordinate NADP(+): Arg48 and Arg54. Residues 125–127, 246–247, Gly286, 301–305, and Arg327 each bind FMN; these read RSS, NA, and KPTSS.

It belongs to the chorismate synthase family. In terms of assembly, homotetramer. Requires FMNH2 as cofactor.

It carries out the reaction 5-O-(1-carboxyvinyl)-3-phosphoshikimate = chorismate + phosphate. The protein operates within metabolic intermediate biosynthesis; chorismate biosynthesis; chorismate from D-erythrose 4-phosphate and phosphoenolpyruvate: step 7/7. Functionally, catalyzes the anti-1,4-elimination of the C-3 phosphate and the C-6 proR hydrogen from 5-enolpyruvylshikimate-3-phosphate (EPSP) to yield chorismate, which is the branch point compound that serves as the starting substrate for the three terminal pathways of aromatic amino acid biosynthesis. This reaction introduces a second double bond into the aromatic ring system. This is Chorismate synthase from Glaesserella parasuis serovar 5 (strain SH0165) (Haemophilus parasuis).